A 61-amino-acid polypeptide reads, in one-letter code: MFTMKKPLLLLFFLATINLSLCEQERNAEEERRDEPDERNAEVEKRFLPIVGKLLSGLFGK.

Residues 1–22 (MFTMKKPLLLLFFLATINLSLC) form the signal peptide. A propeptide spans 23–44 (EQERNAEEERRDEPDERNAEVE) (removed in mature form).

Belongs to the frog skin active peptide (FSAP) family. Temporin subfamily. Expressed by the skin glands.

Its subcellular location is the secreted. Functionally, antimicrobial peptide active against a variety of Gram-positive bacterial strains but not against Gram-negative bacteria. Has weak antifungal activity against a slime mold isolate. Has weak hemolytic activity against human erythrocytes. This is Temporin-CG3 from Amolops chunganensis (Chungan torrent frog).